The sequence spans 99 residues: Large ribosomal subunit protein bL28 (99 aa).

This sequence belongs to the bacterial ribosomal protein bL28 family.

The chain is Large ribosomal subunit protein bL28 from Caulobacter vibrioides (strain ATCC 19089 / CIP 103742 / CB 15) (Caulobacter crescentus).